Reading from the N-terminus, the 298-residue chain is ATP phosphoribosyltransferase (298 aa).

This sequence belongs to the ATP phosphoribosyltransferase family. Long subfamily. Requires Mg(2+) as cofactor.

Its subcellular location is the cytoplasm. The catalysed reaction is 1-(5-phospho-beta-D-ribosyl)-ATP + diphosphate = 5-phospho-alpha-D-ribose 1-diphosphate + ATP. Its pathway is amino-acid biosynthesis; L-histidine biosynthesis; L-histidine from 5-phospho-alpha-D-ribose 1-diphosphate: step 1/9. With respect to regulation, feedback inhibited by histidine. Catalyzes the condensation of ATP and 5-phosphoribose 1-diphosphate to form N'-(5'-phosphoribosyl)-ATP (PR-ATP). Has a crucial role in the pathway because the rate of histidine biosynthesis seems to be controlled primarily by regulation of HisG enzymatic activity. The chain is ATP phosphoribosyltransferase from Psychromonas ingrahamii (strain DSM 17664 / CCUG 51855 / 37).